Reading from the N-terminus, the 615-residue chain is Sodium-coupled neutral amino acid transporter 9 homolog (615 aa).

Residues 1–165 (MPPFFAEFTE…LKDVSGKQGS (165 aa)) lie on the Cytoplasmic side of the membrane. A disordered region spans residues 41 to 65 (VDDNDTDPLLDDEPPRRLPPAGGVP). The segment covering 42-52 (DDNDTDPLLDD) has biased composition (acidic residues). Residues 166 to 186 (IVTIFSIWNTMMGTSLLAMPW) form a helical membrane-spanning segment. Positions 175–180 (TMMGTS) are important for arginine binding and amino acid transport. Residues 187 to 192 (ALQQAG) lie on the Lumenal side of the membrane. The chain crosses the membrane as a helical span at residues 193 to 213 (LVLGIIIMLSMAAICFYTAYI). The Cytoplasmic segment spans residues 214–246 (VIESPKRLQDLSVDPLLAEFSDVCKSLFGRIGE). Residues 247–273 (YCAVVFSVCVLIGGVIVYWVLMSNFLY) traverse the membrane as a helical segment. Over 274-341 (YTGAVVYESM…TGDDSWSFDK (68 aa)) the chain is Lumenal. Asparagine 286 and asparagine 295 each carry an N-linked (GlcNAc...) asparagine glycan. Residues cysteine 304 and cysteine 478 are joined by a disulfide bond. Residues 342 to 358 (FWTLRGTVPIYLAFALF) traverse the membrane as a helical segment. The Cytoplasmic portion of the chain corresponds to 359–367 (PLMNFKSPT). Residues 368 to 392 (FFTKFNVLGTISVMYLLMFVFSKLL) form a helical membrane-spanning segment. The Lumenal segment spans residues 393-413 (ECGVNMDFSNPKSIHYVQLAN). A helical transmembrane segment spans residues 414–434 (MHFPALSGTLTLSYFIHNAVL). Residues 435 to 451 (TILRNQKHPENNARDLS) are Cytoplasmic-facing. The helical transmembrane segment at 452-472 (IGYCLVAFCYVFIGFTFFAAF) threads the bilayer. The Lumenal segment spans residues 473–491 (PVQRSCISDNFLNNFGAGD). Residues 492 to 512 (VLSSTARLFLLFQMITVLPLL) form a helical membrane-spanning segment. Residues 513–533 (MFLVRSQLFYAIFGQTWPGAI) are Cytoplasmic-facing. The helical transmembrane segment at 534-554 (RVIILNVLLIAVAVGFATFYP) threads the bilayer. The Lumenal segment spans residues 555–561 (NVGSILR). Residues 562–582 (YVGSISGLVYVFALPAMVYIK) traverse the membrane as a helical segment. Topologically, residues 583 to 594 (QSEAAGTLTPMK) are cytoplasmic. Residues 595–615 (KYAHYGIIVIGVANLIAQFVI) traverse the membrane as a helical segment.

Belongs to the amino acid/polyamine transporter 2 family. SLC38A9 subfamily.

It localises to the lysosome membrane. It is found in the late endosome membrane. With respect to regulation, amino acid transport is sodium-dependent. Transport of leucine, tyrosine and phenylalanine is increased by arginine binding. Lysosomal amino acid transporter involved in the activation of mTORC1 in response to amino acid levels. Probably acts as an amino acid sensor of the Rag GTPases and Ragulator complexes, 2 complexes involved in amino acid sensing and activation of mTORC1, a signaling complex promoting cell growth in response to growth factors, energy levels, and amino acids. The protein is Sodium-coupled neutral amino acid transporter 9 homolog of Caenorhabditis elegans.